The primary structure comprises 66 residues: Cytochrome c oxidase subunit 26, mitochondrial (66 aa).

The N-terminal 8 residues, 1–8 (MFFSQVLR), are a transit peptide targeting the mitochondrion. Residues 9–27 (SSARAAPIKRYTGGRIGES) are Mitochondrial matrix-facing. Residues 28–64 (WVITEGRRLIPEIFQWSAVLSVCLGWPGAVYFFSKAR) form a helical membrane-spanning segment. The Mitochondrial intermembrane portion of the chain corresponds to 65–66 (KA).

Belongs to the fungal cytochrome c oxidase subunit 26 family. As to quaternary structure, component of the cytochrome c oxidase (complex IV, CIV), a multisubunit enzyme composed of 12 subunits. The complex is composed of a catalytic core of 3 subunits COX1, COX2 and COX3, encoded in the mitochondrial DNA, and 9 supernumerary subunits COX4, COX5A (or COX5B), COX6, COX7, COX8, COX9, COX12, COX13 and COX26, which are encoded in the nuclear genome. The complex exists as a monomer or a dimer and forms supercomplexes (SCs) in the inner mitochondrial membrane with a dimer of ubiquinol-cytochrome c oxidoreductase (cytochrome b-c1 complex, complex III, CIII), resulting in 2 different assemblies (supercomplexes III(2)IV and III(2)IV(2)).

Its subcellular location is the mitochondrion inner membrane. Its function is as follows. Component of the cytochrome c oxidase, the last enzyme in the mitochondrial electron transport chain which drives oxidative phosphorylation. The respiratory chain contains 3 multisubunit complexes succinate dehydrogenase (complex II, CII), ubiquinol-cytochrome c oxidoreductase (cytochrome b-c1 complex, complex III, CIII) and cytochrome c oxidase (complex IV, CIV), that cooperate to transfer electrons derived from NADH and succinate to molecular oxygen, creating an electrochemical gradient over the inner membrane that drives transmembrane transport and the ATP synthase. Cytochrome c oxidase is the component of the respiratory chain that catalyzes the reduction of oxygen to water. Electrons originating from reduced cytochrome c in the intermembrane space (IMS) are transferred via the dinuclear copper A center (CU(A)) of COX2 and heme A of COX1 to the active site in COX1, a binuclear center (BNC) formed by heme A3 and copper B (CU(B)). The BNC reduces molecular oxygen to 2 water molecules using 4 electrons from cytochrome c in the IMS and 4 protons from the mitochondrial matrix. The protein is Cytochrome c oxidase subunit 26, mitochondrial (COX26) of Saccharomyces cerevisiae (strain ATCC 204508 / S288c) (Baker's yeast).